The chain runs to 484 residues: UDP-glucose:undecaprenyl-phosphate glucose-1-phosphate transferase (484 aa).

5 helical membrane passes run M37–A57, Y59–L79, V93–V113, G122–L142, and I299–V319.

Belongs to the bacterial sugar transferase family.

The protein localises to the cell inner membrane. The enzyme catalyses di-trans,octa-cis-undecaprenyl phosphate + UDP-alpha-D-glucose = alpha-D-glucosyl di-trans,octa-cis-undecaprenyl diphosphate + UMP. It functions in the pathway glycan biosynthesis; xanthan biosynthesis. Its function is as follows. Is the initiating enzyme for the synthesis of the exopolysaccharide xanthan. Catalyzes the transfer of the glucose-1-phosphate moiety from UDP-Glc onto the carrier lipid undecaprenyl phosphate (C55-P), forming a phosphoanhydride bond yielding to glucosyl-pyrophosphoryl-undecaprenol (Glc-PP-C55). This Xanthomonas campestris pv. campestris protein is UDP-glucose:undecaprenyl-phosphate glucose-1-phosphate transferase (gumD).